The primary structure comprises 548 residues: Eukaryotic translation initiation factor 3 subunit D (548 aa).

At Lys53 the chain carries N6-acetyllysine. Position 161 is a phosphoserine (Ser161). Positions 285–299 (DFDLLTVSETANEPP) are RNA gate. Residues 523-548 (PDGTFSSDEDDEEEEEEEEEEEEEEA) are disordered. 2 positions are modified to phosphoserine: Ser528 and Ser529. A compositionally biased stretch (acidic residues) spans 529–548 (SDEDDEEEEEEEEEEEEEEA).

It belongs to the eIF-3 subunit D family. Component of the eukaryotic translation initiation factor 3 (eIF-3) complex, which is composed of 13 subunits: EIF3A, EIF3B, EIF3C, EIF3D, EIF3E, EIF3F, EIF3G, EIF3H, EIF3I, EIF3J, EIF3K, EIF3L and EIF3M. The eIF-3 complex appears to include 3 stable modules: module A is composed of EIF3A, EIF3B, EIF3G and EIF3I; module B is composed of EIF3F, EIF3H, and EIF3M; and module C is composed of EIF3C, EIF3D, EIF3E, EIF3K and EIF3L. EIF3C of module C binds EIF3B of module A and EIF3H of module B, thereby linking the three modules. EIF3J is a labile subunit that binds to the eIF-3 complex via EIF3B. The eIF-3 complex interacts with RPS6KB1 under conditions of nutrient depletion. Mitogenic stimulation leads to binding and activation of a complex composed of MTOR and RPTOR, leading to phosphorylation and release of RPS6KB1 and binding of EIF4B to eIF-3.

The protein localises to the cytoplasm. MRNA cap-binding component of the eukaryotic translation initiation factor 3 (eIF-3) complex, a complex required for several steps in the initiation of protein synthesis of a specialized repertoire of mRNAs. The eIF-3 complex associates with the 40S ribosome and facilitates the recruitment of eIF-1, eIF-1A, eIF-2:GTP:methionyl-tRNAi and eIF-5 to form the 43S pre-initiation complex (43S PIC). The eIF-3 complex stimulates mRNA recruitment to the 43S PIC and scanning of the mRNA for AUG recognition. The eIF-3 complex is also required for disassembly and recycling of post-termination ribosomal complexes and subsequently prevents premature joining of the 40S and 60S ribosomal subunits prior to initiation. The eIF-3 complex specifically targets and initiates translation of a subset of mRNAs involved in cell proliferation, including cell cycling, differentiation and apoptosis, and uses different modes of RNA stem-loop binding to exert either translational activation or repression. In the eIF-3 complex, EIF3D specifically recognizes and binds the 7-methylguanosine cap of a subset of mRNAs. The sequence is that of Eukaryotic translation initiation factor 3 subunit D from Bos taurus (Bovine).